The sequence spans 302 residues: MASKASVAIVGSGNISTDLLYKLQRSEWLEPRWMIGIDPESEGLKRARGFGLETSHEGVDWLLGQDEKPDLVFEATSAYVHKAAAPRYEEAGIRAIDLTPAAVGPAVVPPANLRAHLDAPNVNMITCGGQATIPIVYAVSRVVEVPYAEIVASVASVSAGPGTRANIDEFTKTTSKGVEVIGGAKRGKAIIILNPADPPMIMRDTIFCAIPEDADRAAIAASIHDVVSQVQQYVPGYRLLNEPQFDEPSVVNGGNHVVTTFVEVEGAGDFLPPYAGNLDIMTAAATKVGEEIAKELLSAKVS.

Residue 12–15 (SGNI) participates in NAD(+) binding. Cys-127 (acyl-thioester intermediate) is an active-site residue. NAD(+)-binding positions include 158–166 (SAGPGTRAN) and Asn-277.

It belongs to the acetaldehyde dehydrogenase family.

The catalysed reaction is acetaldehyde + NAD(+) + CoA = acetyl-CoA + NADH + H(+). The protein is Acetaldehyde dehydrogenase 1 of Mycobacteroides abscessus (strain ATCC 19977 / DSM 44196 / CCUG 20993 / CIP 104536 / JCM 13569 / NCTC 13031 / TMC 1543 / L948) (Mycobacterium abscessus).